Reading from the N-terminus, the 437-residue chain is GTPase Obg (437 aa).

In terms of domain architecture, Obg spans 2-160 (SMFLDTAKIS…RQLELELKIL (159 aa)). Positions 161–338 (ADVGLVGFPS…LLEATAELLA (178 aa)) constitute an OBG-type G domain. GTP-binding positions include 167–174 (GFPSVGKS), 192–196 (FTTIV), 214–217 (DLPG), 284–287 (NKMD), and 319–321 (SSL). 2 residues coordinate Mg(2+): Ser174 and Thr194. Residues 359–437 (GFAETEKDFE…IGKFEFEFVD (79 aa)) enclose the OCT domain.

Belongs to the TRAFAC class OBG-HflX-like GTPase superfamily. OBG GTPase family. In terms of assembly, monomer. The cofactor is Mg(2+).

It localises to the cytoplasm. Functionally, an essential GTPase which binds GTP, GDP and possibly (p)ppGpp with moderate affinity, with high nucleotide exchange rates and a fairly low GTP hydrolysis rate. Plays a role in control of the cell cycle, stress response, ribosome biogenesis and in those bacteria that undergo differentiation, in morphogenesis control. In Streptococcus pyogenes serotype M5 (strain Manfredo), this protein is GTPase Obg.